We begin with the raw amino-acid sequence, 274 residues long: Light-independent protochlorophyllide reductase iron-sulfur ATP-binding protein (274 aa).

Residues 12-17 (GIGKST) and lysine 41 contribute to the ATP site. Serine 16 contributes to the Mg(2+) binding site. Residues cysteine 97 and cysteine 131 each coordinate [4Fe-4S] cluster.

The protein belongs to the NifH/BchL/ChlL family. Homodimer. Protochlorophyllide reductase is composed of three subunits; BchL, BchN and BchB. It depends on [4Fe-4S] cluster as a cofactor.

It catalyses the reaction chlorophyllide a + oxidized 2[4Fe-4S]-[ferredoxin] + 2 ADP + 2 phosphate = protochlorophyllide a + reduced 2[4Fe-4S]-[ferredoxin] + 2 ATP + 2 H2O. It participates in porphyrin-containing compound metabolism; bacteriochlorophyll biosynthesis (light-independent). Component of the dark-operative protochlorophyllide reductase (DPOR) that uses Mg-ATP and reduced ferredoxin to reduce ring D of protochlorophyllide (Pchlide) to form chlorophyllide a (Chlide). This reaction is light-independent. The L component serves as a unique electron donor to the NB-component of the complex, and binds Mg-ATP. This Chloroherpeton thalassium (strain ATCC 35110 / GB-78) protein is Light-independent protochlorophyllide reductase iron-sulfur ATP-binding protein.